Reading from the N-terminus, the 174-residue chain is von Hippel-Lindau tumor suppressor homolog (174 aa).

Belongs to the VHL family. As to quaternary structure, interacts with hif-1 (hydroxylated on 'Pro-621'); the interaction induces hif-1 degradation. May be a component of the cullin E3 ubiquitin ligase complex.

It participates in protein modification; protein ubiquitination. Functionally, involved in the response to variation in environmental oxygen levels by targeting the hypoxia-inducible transcription factor hif-1 for proteasomal degradation when oxygen levels are normal (around 20%). By regulating hif-1 expression, plays a role in iron homeostasis, aging, heat acclimation and progeny size. Mediates resistance to enteropathogenic E.coli. Mediates susceptibility to B.thuringiensis pore-forming toxins. Not involved in P.aeruginosa susceptibility. The chain is von Hippel-Lindau tumor suppressor homolog from Caenorhabditis elegans.